Reading from the N-terminus, the 1149-residue chain is ATP-dependent helicase/deoxyribonuclease subunit B (1149 aa).

An ATP-binding site is contributed by 8-15 (GRAGTGKT). Residues cysteine 784, cysteine 1102, cysteine 1105, and cysteine 1111 each coordinate [4Fe-4S] cluster.

Belongs to the helicase family. AddB/RexB type 1 subfamily. In terms of assembly, heterodimer of AddA and AddB. It depends on Mg(2+) as a cofactor. [4Fe-4S] cluster serves as cofactor.

The heterodimer acts as both an ATP-dependent DNA helicase and an ATP-dependent, dual-direction single-stranded exonuclease. Recognizes the chi site generating a DNA molecule suitable for the initiation of homologous recombination. The AddB subunit has 5' -&gt; 3' nuclease activity but not helicase activity. The protein is ATP-dependent helicase/deoxyribonuclease subunit B of Thermoanaerobacter pseudethanolicus (strain ATCC 33223 / 39E) (Clostridium thermohydrosulfuricum).